The sequence spans 101 residues: Large ribosomal subunit protein uL24 (101 aa).

Belongs to the universal ribosomal protein uL24 family. In terms of assembly, part of the 50S ribosomal subunit.

Its function is as follows. One of two assembly initiator proteins, it binds directly to the 5'-end of the 23S rRNA, where it nucleates assembly of the 50S subunit. Functionally, one of the proteins that surrounds the polypeptide exit tunnel on the outside of the subunit. The protein is Large ribosomal subunit protein uL24 of Streptococcus gordonii (strain Challis / ATCC 35105 / BCRC 15272 / CH1 / DL1 / V288).